Reading from the N-terminus, the 277-residue chain is Large ribosomal subunit protein uL2 (277 aa).

Positions 216 to 277 (RRPHNRGVAM…IIRRRKVGKG (62 aa)) are disordered.

The protein belongs to the universal ribosomal protein uL2 family. Part of the 50S ribosomal subunit. Forms a bridge to the 30S subunit in the 70S ribosome.

One of the primary rRNA binding proteins. Required for association of the 30S and 50S subunits to form the 70S ribosome, for tRNA binding and peptide bond formation. It has been suggested to have peptidyltransferase activity; this is somewhat controversial. Makes several contacts with the 16S rRNA in the 70S ribosome. The polypeptide is Large ribosomal subunit protein uL2 (Acidiphilium cryptum (strain JF-5)).